Reading from the N-terminus, the 20-residue chain is Putative antimicrobial protein 2 (20 aa).

The disordered stretch occupies residues 1-20 (DLPECCSATELELDSGKQTS).

In terms of biological role, may have antimicrobial activity. This chain is Putative antimicrobial protein 2, found in Cenchritis muricatus (Beaded periwinkle).